We begin with the raw amino-acid sequence, 414 residues long: Histidine--tRNA ligase (414 aa).

It belongs to the class-II aminoacyl-tRNA synthetase family. In terms of assembly, homodimer.

Its subcellular location is the cytoplasm. It catalyses the reaction tRNA(His) + L-histidine + ATP = L-histidyl-tRNA(His) + AMP + diphosphate + H(+). In Mycoplasma genitalium (strain ATCC 33530 / DSM 19775 / NCTC 10195 / G37) (Mycoplasmoides genitalium), this protein is Histidine--tRNA ligase (hisS).